A 239-amino-acid polypeptide reads, in one-letter code: MQERKRVLVKFSGEALAGENGFGIENSILKFIASEIKELIKNQIEVGIVIGGGNIIRGVSAAKGGLIKRTSGDHMGMLATVINAIAIQEALESSGLEVRVQSAIQMEAFCETYIMRRAQRHLEKGRVVVFAAGTGNPYFTTDTTAILRAVEIDADMVIKATKVNGVYDKDPKQFDDAVFLNTLSYDEAMQDNIKVMDDTAIALAKDNKLPIVVCNMFEEGNLLKIIQGDTSLCSTVKNN.

10–13 (KFSG) provides a ligand contact to ATP. The interval 18-23 (GENGFG) is involved in allosteric activation by GTP. Glycine 52 provides a ligand contact to UMP. Residues glycine 53 and arginine 57 each contribute to the ATP site. Residues aspartate 73 and 134-141 (TGNPYFTT) contribute to the UMP site. ATP-binding residues include threonine 161, tyrosine 167, and aspartate 170.

This sequence belongs to the UMP kinase family. As to quaternary structure, homohexamer.

Its subcellular location is the cytoplasm. The catalysed reaction is UMP + ATP = UDP + ADP. The protein operates within pyrimidine metabolism; CTP biosynthesis via de novo pathway; UDP from UMP (UMPK route): step 1/1. Its activity is regulated as follows. Allosterically activated by GTP. Inhibited by UTP. Functionally, catalyzes the reversible phosphorylation of UMP to UDP. This chain is Uridylate kinase, found in Campylobacter jejuni subsp. jejuni serotype O:2 (strain ATCC 700819 / NCTC 11168).